Reading from the N-terminus, the 316-residue chain is Dehydrogenase/reductase SDR family protein 7-like (316 aa).

Over 1 to 18 (MFFYKIIYFIGFPYIVLR) the chain is Cytoplasmic. Residues 19 to 39 (LIVSIILPIASLYFIYCNFIA) traverse the membrane as a helical; Signal-anchor for type II membrane protein segment. Residues 40–316 (PKLREKPESS…HKFASSSVKK (277 aa)) are Peroxisomal-facing. 56-80 (IITGASSGIGAELAKKYARLGCKVT) provides a ligand contact to NAD(+). A substrate-binding site is contributed by S194. The Proton acceptor role is filled by Y207.

It belongs to the short-chain dehydrogenases/reductases (SDR) family.

It is found in the peroxisome membrane. Putative oxidoreductase. In Dictyostelium discoideum (Social amoeba), this protein is Dehydrogenase/reductase SDR family protein 7-like.